The chain runs to 503 residues: Potassium voltage-gated channel subfamily V member 1 (503 aa).

Disordered stretches follow at residues 1–20 and 171–192; these read MDLS…DSGS and KKDT…QGPC. Residues 3–213 lie on the Cytoplasmic side of the membrane; that stretch reads LSPRNRPLLD…EKPGSSTAAR (211 aa). Positions 10 to 20 are enriched in low complexity; that stretch reads LLDSSSLDSGS. Positions 171–184 are enriched in basic and acidic residues; that stretch reads KKDTDDQESQHESE. The chain crosses the membrane as a helical span at residues 214–234; the sequence is IFGVISIIFVAVSIVNMALMS. The Extracellular segment spans residues 235 to 241; the sequence is AELSWLN. A helical membrane pass occupies residues 242–262; that stretch reads LQLLEILEYVCISWFTGEFIL. Residues 263 to 279 are Cytoplasmic-facing; that stretch reads RFLCVKDRCHFLRKVPN. Residues 280–300 form a helical membrane-spanning segment; sequence IIDLLAILPFYITLLVESLSG. Over 301-312 the chain is Extracellular; sequence SHTTQELENVGR. Residues 313 to 334 form a helical; Voltage-sensor membrane-spanning segment; that stretch reads LVQVLRLLRALRMLKLGRHSTG. The Cytoplasmic portion of the chain corresponds to 335–348; sequence LRSLGMTITQCYEE. The chain crosses the membrane as a helical span at residues 349 to 369; it reads VGLLLLFLSVGISIFSTIEYF. The Selectivity filter signature appears at 395 to 400; it reads TVGYGD. The helical transmembrane segment at 410 to 430 threads the bilayer; that stretch reads IVAFMCILSGILVLALPIAII. Residues 431-503 lie on the Cytoplasmic side of the membrane; sequence NDRFSACYFT…RSSGGDDFWF (73 aa).

Belongs to the potassium channel family. V (TC 1.A.1.2) subfamily. Kv8.1/KCNV1 sub-subfamily. In terms of assembly, heteromultimer with KCNB1 and KCNB2. Interacts with KCNC4 and KCND1. As to expression, detected in brain, in neocortex, olfactory tubercle, hippocampus, dentate gyrus, piriform cortex and amygdala. Detected in Purkinje cells and granular cells of the cerebellum, in hippocampal CA4 neurons and neocortex pyramidal cells.

The protein resides in the cell membrane. Its function is as follows. Potassium channel subunit that does not form functional channels by itself. Modulates KCNB1 and KCNB2 channel activity by shifting the threshold for inactivation to more negative values and by slowing the rate of inactivation. Can down-regulate the channel activity of KCNB1, KCNB2, KCNC4 and KCND1, possibly by trapping them in intracellular membranes. The sequence is that of Potassium voltage-gated channel subfamily V member 1 (Kcnv1) from Rattus norvegicus (Rat).